Reading from the N-terminus, the 306-residue chain is Agmatinase (306 aa).

Residues H126, D149, H151, D153, D230, and D232 each contribute to the Mn(2+) site.

This sequence belongs to the arginase family. Agmatinase subfamily. Mn(2+) serves as cofactor.

The enzyme catalyses agmatine + H2O = urea + putrescine. It functions in the pathway amine and polyamine biosynthesis; putrescine biosynthesis via agmatine pathway; putrescine from agmatine: step 1/1. Catalyzes the formation of putrescine from agmatine. In Escherichia coli O9:H4 (strain HS), this protein is Agmatinase.